Consider the following 439-residue polypeptide: GTPase Der (439 aa).

EngA-type G domains are found at residues 4–169 and 177–352; these read AMVA…PEND and IKIA…EEYN. GTP contacts are provided by residues 10-17, 57-61, 120-123, 183-190, 230-234, and 295-298; these read GRPNVGKS, DTGGL, NKVD, DTAGI, and NKWD. The region spanning 353–437 is the KH-like domain; that stretch reads KRITTGLLNN…PIVISTKKRG (85 aa).

The protein belongs to the TRAFAC class TrmE-Era-EngA-EngB-Septin-like GTPase superfamily. EngA (Der) GTPase family. In terms of assembly, associates with the 50S ribosomal subunit.

Its function is as follows. GTPase that plays an essential role in the late steps of ribosome biogenesis. The chain is GTPase Der from Caldanaerobacter subterraneus subsp. tengcongensis (strain DSM 15242 / JCM 11007 / NBRC 100824 / MB4) (Thermoanaerobacter tengcongensis).